The chain runs to 337 residues: F-box protein At2g27310 (337 aa).

The F-box domain maps to 10–58 (DSISTLHSDIIQTQILTRLDGPTLASTATTSSYLQTLCTEEKLWQELSI).

The protein is F-box protein At2g27310 of Arabidopsis thaliana (Mouse-ear cress).